Here is a 279-residue protein sequence, read N- to C-terminus: Putative short-chain type dehydrogenase/reductase MSMEG_6031/MSMEI_5872 (279 aa).

11 to 33 is an NAD(+) binding site; it reads FITGAARGQGRSHAVRLAEEGAD. Lys-65 is covalently cross-linked (Isoglutamyl lysine isopeptide (Lys-Gln) (interchain with Q-Cter in protein Pup)). Substrate is bound at residue Ser-158. Tyr-171 serves as the catalytic Proton acceptor.

The protein belongs to the short-chain dehydrogenases/reductases (SDR) family.

The chain is Putative short-chain type dehydrogenase/reductase MSMEG_6031/MSMEI_5872 from Mycolicibacterium smegmatis (strain ATCC 700084 / mc(2)155) (Mycobacterium smegmatis).